A 162-amino-acid chain; its full sequence is NADH-quinone oxidoreductase subunit I (162 aa).

4Fe-4S ferredoxin-type domains follow at residues 53–83 and 93–122; these read LRRYPNGEERCIACKLCEAVCPAMAITIESE and TRYDIDMIKCIFCGFCEEACPVDAIVETRV. [4Fe-4S] cluster is bound by residues Cys63, Cys66, Cys69, Cys73, Cys102, Cys105, Cys108, and Cys112.

The protein belongs to the complex I 23 kDa subunit family. As to quaternary structure, NDH-1 is composed of 14 different subunits. Subunits NuoA, H, J, K, L, M, N constitute the membrane sector of the complex. [4Fe-4S] cluster is required as a cofactor.

It localises to the cell inner membrane. It carries out the reaction a quinone + NADH + 5 H(+)(in) = a quinol + NAD(+) + 4 H(+)(out). Its function is as follows. NDH-1 shuttles electrons from NADH, via FMN and iron-sulfur (Fe-S) centers, to quinones in the respiratory chain. The immediate electron acceptor for the enzyme in this species is believed to be ubiquinone. Couples the redox reaction to proton translocation (for every two electrons transferred, four hydrogen ions are translocated across the cytoplasmic membrane), and thus conserves the redox energy in a proton gradient. The sequence is that of NADH-quinone oxidoreductase subunit I from Nitrosomonas europaea (strain ATCC 19718 / CIP 103999 / KCTC 2705 / NBRC 14298).